A 524-amino-acid chain; its full sequence is Bifunctional purine biosynthesis protein PurH (524 aa).

Residues 1–149 enclose the MGS-like domain; that stretch reads MSDPLIKRAL…KNNESVTVLT (149 aa).

Belongs to the PurH family.

The catalysed reaction is (6R)-10-formyltetrahydrofolate + 5-amino-1-(5-phospho-beta-D-ribosyl)imidazole-4-carboxamide = 5-formamido-1-(5-phospho-D-ribosyl)imidazole-4-carboxamide + (6S)-5,6,7,8-tetrahydrofolate. The enzyme catalyses IMP + H2O = 5-formamido-1-(5-phospho-D-ribosyl)imidazole-4-carboxamide. Its pathway is purine metabolism; IMP biosynthesis via de novo pathway; 5-formamido-1-(5-phospho-D-ribosyl)imidazole-4-carboxamide from 5-amino-1-(5-phospho-D-ribosyl)imidazole-4-carboxamide (10-formyl THF route): step 1/1. The protein operates within purine metabolism; IMP biosynthesis via de novo pathway; IMP from 5-formamido-1-(5-phospho-D-ribosyl)imidazole-4-carboxamide: step 1/1. The protein is Bifunctional purine biosynthesis protein PurH of Chlorobium luteolum (strain DSM 273 / BCRC 81028 / 2530) (Pelodictyon luteolum).